The chain runs to 259 residues: Ribonuclease HII (259 aa).

One can recognise an RNase H type-2 domain in the interval 70–258 (TLIVGIDEVG…VKSLVLGKKE (189 aa)). Residues D76, E77, and D168 each coordinate a divalent metal cation.

The protein belongs to the RNase HII family. The cofactor is Mn(2+). Mg(2+) is required as a cofactor.

It is found in the cytoplasm. It catalyses the reaction Endonucleolytic cleavage to 5'-phosphomonoester.. Its function is as follows. Endonuclease that specifically degrades the RNA of RNA-DNA hybrids. The sequence is that of Ribonuclease HII from Streptococcus pneumoniae (strain ATCC 700669 / Spain 23F-1).